A 251-amino-acid polypeptide reads, in one-letter code: 1-(5-phosphoribosyl)-5-[(5-phosphoribosylamino)methylideneamino] imidazole-4-carboxamide isomerase (251 aa).

Asp8 (proton acceptor) is an active-site residue. Catalysis depends on Asp131, which acts as the Proton donor.

Belongs to the HisA/HisF family.

The protein localises to the cytoplasm. The enzyme catalyses 1-(5-phospho-beta-D-ribosyl)-5-[(5-phospho-beta-D-ribosylamino)methylideneamino]imidazole-4-carboxamide = 5-[(5-phospho-1-deoxy-D-ribulos-1-ylimino)methylamino]-1-(5-phospho-beta-D-ribosyl)imidazole-4-carboxamide. It functions in the pathway amino-acid biosynthesis; L-histidine biosynthesis; L-histidine from 5-phospho-alpha-D-ribose 1-diphosphate: step 4/9. This Burkholderia vietnamiensis (strain G4 / LMG 22486) (Burkholderia cepacia (strain R1808)) protein is 1-(5-phosphoribosyl)-5-[(5-phosphoribosylamino)methylideneamino] imidazole-4-carboxamide isomerase.